We begin with the raw amino-acid sequence, 332 residues long: tRNA uridine(34) hydroxylase (332 aa).

A Rhodanese domain is found at serine 127–serine 221. Cysteine 181 functions as the Cysteine persulfide intermediate in the catalytic mechanism. A disordered region spans residues alanine 308–glutamine 332. Residues glutamine 321–glutamine 332 are compositionally biased toward basic and acidic residues.

Belongs to the TrhO family.

It catalyses the reaction uridine(34) in tRNA + AH2 + O2 = 5-hydroxyuridine(34) in tRNA + A + H2O. Functionally, catalyzes oxygen-dependent 5-hydroxyuridine (ho5U) modification at position 34 in tRNAs. The chain is tRNA uridine(34) hydroxylase from Francisella tularensis subsp. tularensis (strain FSC 198).